A 454-amino-acid chain; its full sequence is Chaperone SurA (454 aa).

The first 28 residues, methionine 1–alanine 28, serve as a signal peptide directing secretion. PpiC domains lie at aspartate 177–alanine 278 and leucine 287–glutamate 386. Positions leucine 431 to arginine 454 are disordered. Residues proline 443 to arginine 454 are compositionally biased toward acidic residues.

The protein localises to the periplasm. It carries out the reaction [protein]-peptidylproline (omega=180) = [protein]-peptidylproline (omega=0). Its function is as follows. Chaperone involved in the correct folding and assembly of outer membrane proteins. Recognizes specific patterns of aromatic residues and the orientation of their side chains, which are found more frequently in integral outer membrane proteins. May act in both early periplasmic and late outer membrane-associated steps of protein maturation. The sequence is that of Chaperone SurA from Methylococcus capsulatus (strain ATCC 33009 / NCIMB 11132 / Bath).